The chain runs to 398 residues: ATP-dependent RNA helicase eIF4A (398 aa).

The Q motif motif lies at 25–53 (DSFDTMNLKPELLRGVYAYGFERPSAIQQ). A Helicase ATP-binding domain is found at 56–226 (IMPVIKGHDV…TKFMRDPVRI (171 aa)). 69 to 76 (AQSGTGKT) is an ATP binding site. Residues 174–177 (DEAD) carry the DEAD box motif. Residues 237–398 (GIKQFYIAVE…EMPMNVADLI (162 aa)) enclose the Helicase C-terminal domain.

It belongs to the DEAD box helicase family. eIF4A subfamily. As to quaternary structure, component of the eIF4F complex, which composition varies with external and internal environmental conditions. It is composed of at least eIF4A, eIF4E and eIF4G.

The protein resides in the cytoplasm. The enzyme catalyses ATP + H2O = ADP + phosphate + H(+). Its function is as follows. ATP-dependent RNA helicase which is a subunit of the eIF4F complex involved in cap recognition and is required for mRNA binding to ribosome. In the current model of translation initiation, eIF4A unwinds RNA secondary structures in the 5'-UTR of mRNAs which is necessary to allow efficient binding of the small ribosomal subunit, and subsequent scanning for the initiator codon. The protein is ATP-dependent RNA helicase eIF4A (tif1) of Sclerotinia sclerotiorum (strain ATCC 18683 / 1980 / Ss-1) (White mold).